The sequence spans 533 residues: Probable anion transporter 4, chloroplastic (533 aa).

The next 12 membrane-spanning stretches (helical) occupy residues 117-137 (MLAL…VAIV), 152-172 (IVQS…GTLV), 179-199 (VVMA…PWAA), 203-223 (LWAL…ALPC), 243-263 (IAMA…PILM), 267-287 (GIYG…LVWL), 342-362 (VIVA…WMPI), 376-396 (AWFS…AGFW), 417-437 (IGFI…QPLV), 438-458 (ASAW…GFLI), 474-494 (MCLT…GFFV), and 502-522 (GFIL…NIYA).

It belongs to the major facilitator superfamily. Sodium/anion cotransporter (TC 2.A.1.14) family. In terms of tissue distribution, expressed in leaf veins and root tips.

The protein localises to the plastid. It localises to the chloroplast membrane. In terms of biological role, inorganic phosphate and probable anion transporter. This is Probable anion transporter 4, chloroplastic (ANTR4) from Arabidopsis thaliana (Mouse-ear cress).